The following is a 375-amino-acid chain: Dual-specificity RNA methyltransferase RlmN (375 aa).

The active-site Proton acceptor is Glu94. A Radical SAM core domain is found at 100 to 339 (EDDRATLCVS…VTVRKTRGDD (240 aa)). Cysteines 107 and 344 form a disulfide. 3 residues coordinate [4Fe-4S] cluster: Cys114, Cys118, and Cys121. S-adenosyl-L-methionine-binding positions include 168–169 (GE), Ser200, 222–224 (SLH), and Asn301. The S-methylcysteine intermediate role is filled by Cys344.

The protein belongs to the radical SAM superfamily. RlmN family. [4Fe-4S] cluster serves as cofactor.

The protein localises to the cytoplasm. The catalysed reaction is adenosine(2503) in 23S rRNA + 2 reduced [2Fe-2S]-[ferredoxin] + 2 S-adenosyl-L-methionine = 2-methyladenosine(2503) in 23S rRNA + 5'-deoxyadenosine + L-methionine + 2 oxidized [2Fe-2S]-[ferredoxin] + S-adenosyl-L-homocysteine. It catalyses the reaction adenosine(37) in tRNA + 2 reduced [2Fe-2S]-[ferredoxin] + 2 S-adenosyl-L-methionine = 2-methyladenosine(37) in tRNA + 5'-deoxyadenosine + L-methionine + 2 oxidized [2Fe-2S]-[ferredoxin] + S-adenosyl-L-homocysteine. Functionally, specifically methylates position 2 of adenine 2503 in 23S rRNA and position 2 of adenine 37 in tRNAs. m2A2503 modification seems to play a crucial role in the proofreading step occurring at the peptidyl transferase center and thus would serve to optimize ribosomal fidelity. The sequence is that of Dual-specificity RNA methyltransferase RlmN from Vibrio campbellii (strain ATCC BAA-1116).